We begin with the raw amino-acid sequence, 398 residues long: tRNA-specific 2-thiouridylase MnmA (398 aa).

Residues 18–25 (AMSGGVDS) and Leu-44 contribute to the ATP site. Cys-112 (nucleophile) is an active-site residue. An intrachain disulfide couples Cys-112 to Cys-213. ATP is bound at residue Gly-136. Positions 163-165 (RDQ) are interaction with tRNA. Cys-213 functions as the Cysteine persulfide intermediate in the catalytic mechanism.

The protein belongs to the MnmA/TRMU family.

The protein localises to the cytoplasm. It catalyses the reaction S-sulfanyl-L-cysteinyl-[protein] + uridine(34) in tRNA + AH2 + ATP = 2-thiouridine(34) in tRNA + L-cysteinyl-[protein] + A + AMP + diphosphate + H(+). Catalyzes the 2-thiolation of uridine at the wobble position (U34) of tRNA, leading to the formation of s(2)U34. The protein is tRNA-specific 2-thiouridylase MnmA of Agrobacterium fabrum (strain C58 / ATCC 33970) (Agrobacterium tumefaciens (strain C58)).